Reading from the N-terminus, the 182-residue chain is Glycerol-3-phosphate acyltransferase 1 (182 aa).

5 helical membrane-spanning segments follow: residues 5–25 (MQFLYLVASYLFGNILTAYIV), 54–74 (GYFVATFLGDAIKGAIVVSIA), 81–101 (STFLMLTLLAVIMGHIYPILF), 117–137 (IAFDYLIALTLVTVFIIFYLI), and 157–177 (ILYSYSIVTTILSVLIIVLIL).

Belongs to the PlsY family. In terms of assembly, probably interacts with PlsX.

The protein localises to the cell membrane. The catalysed reaction is an acyl phosphate + sn-glycerol 3-phosphate = a 1-acyl-sn-glycero-3-phosphate + phosphate. It participates in lipid metabolism; phospholipid metabolism. In terms of biological role, catalyzes the transfer of an acyl group from acyl-phosphate (acyl-PO(4)) to glycerol-3-phosphate (G3P) to form lysophosphatidic acid (LPA). This enzyme utilizes acyl-phosphate as fatty acyl donor, but not acyl-CoA or acyl-ACP. This is Glycerol-3-phosphate acyltransferase 1 from Bacillus thuringiensis subsp. konkukian (strain 97-27).